We begin with the raw amino-acid sequence, 223 residues long: Ribonuclease 3 (223 aa).

The RNase III domain maps to 4-127 (YSQLEKRLNY…IIGAVYLEAG (124 aa)). A Mg(2+)-binding site is contributed by Glu40. Asp44 is an active-site residue. Mg(2+)-binding residues include Asn113 and Glu116. The active site involves Glu116. The region spanning 154-223 (DYKTALQELT…AKIALEALKK (70 aa)) is the DRBM domain.

It belongs to the ribonuclease III family. Homodimer. Mg(2+) is required as a cofactor.

The protein resides in the cytoplasm. The enzyme catalyses Endonucleolytic cleavage to 5'-phosphomonoester.. Digests double-stranded RNA. Involved in the processing of primary rRNA transcript to yield the immediate precursors to the large and small rRNAs (23S and 16S). Processes some mRNAs, and tRNAs when they are encoded in the rRNA operon. Processes pre-crRNA and tracrRNA of type II CRISPR loci if present in the organism. This Sulfurovum sp. (strain NBC37-1) protein is Ribonuclease 3.